Here is a 349-residue protein sequence, read N- to C-terminus: tRNA pseudouridine synthase D (349 aa).

Phenylalanine 27 lines the substrate pocket. The Nucleophile role is filled by aspartate 80. Residue asparagine 129 participates in substrate binding. The 149-residue stretch at 155–303 folds into the TRUD domain; the sequence is GVPNYFGAQR…VEAARRAMLL (149 aa). A substrate-binding site is contributed by phenylalanine 329.

The protein belongs to the pseudouridine synthase TruD family.

It catalyses the reaction uridine(13) in tRNA = pseudouridine(13) in tRNA. Responsible for synthesis of pseudouridine from uracil-13 in transfer RNAs. This chain is tRNA pseudouridine synthase D, found in Escherichia fergusonii (strain ATCC 35469 / DSM 13698 / CCUG 18766 / IAM 14443 / JCM 21226 / LMG 7866 / NBRC 102419 / NCTC 12128 / CDC 0568-73).